A 426-amino-acid polypeptide reads, in one-letter code: Monocarboxylate transporter 13 (426 aa).

The Cytoplasmic portion of the chain corresponds to 1-10; the sequence is MAYRAEPPDG. The next 12 helical transmembrane spans lie at 11–31, 52–72, 83–103, 106–126, 139–159, 172–192, 221–241, 244–264, 283–303, 306–326, 338–358, and 374–394; these read GWGWMVVLSAFFQSALVFGVL, VSWIASIGIAVQQFGSPVGSA, VMTGGILTALGMLLASFATSL, LYLSIGLLSGSGWALTFTPTL, LAMGLALTGVGLSSFAFAPLF, LLLVSALSLHLVACGALLRPL, VALTLINTGYFIPYVHLVAHL, LGWDPLPAAFLLSVAAISDLV, LLMLWTTLTGVILALYPVAEA, GLVALTMAYGFTSGALTPVAF, IYCGLGLVQMVESIGGLLGAP, and FVVAGAFLLAGSGVLITLPHF. The Cytoplasmic segment spans residues 395–426; the sequence is FCFSAPTSKPQDLVTEALDTKVPLPEEGLGED.

This sequence belongs to the major facilitator superfamily. Monocarboxylate porter (TC 2.A.1.13) family.

It localises to the golgi apparatus membrane. The protein resides in the cell membrane. In terms of biological role, proton-linked monocarboxylate transporter. May catalyze the transport of monocarboxylates across the plasma membrane. The polypeptide is Monocarboxylate transporter 13 (SLC16A13) (Bos taurus (Bovine)).